Reading from the N-terminus, the 1078-residue chain is MEGILAFDRELDVALLDRVVQTFYQGVGAEQQQAQQVLTQFQAHPDAWSQAYSILEKSEYPQTKYIALSVLDKLITTRWKMLPKEQRLGIRNYIVAVMIKNSSDETVLQQQKTFLNKLDLTLVQILKQEWPHNWPNFIPEIVQASKTNLSLCENNMIVLRLLSEEIFDYSAEQMTQLKTKNLKNQMCGEFAEIFQLCSQILERAQKPSLIKATLGTLLRFLNWIPLGYIFETNIVELITNRFLNVPDFRNVTIECLTEIASLTSQPQYNDKFVTMFNLVMTSVNSMLPLQTDFREAYEESSTNEQDFIQNLALFLCAFFSSHLRPLENPENQEVLLNAHSYLLNISRINEREIFKICLEYWSKLVAQLYEEMQQIPMSEMNPLLNLSSPTSLISSNPNMLANLPLRKHIYKDILSTLRLVMIENMVKPEEVLIVENDEGEIVREFVKETDTITLYKSMREVLVYLTHLDVVDTEIVMTEKLARIVVGTEWSWQNLNTLCWAIGSISGAMNEEMEKRFLVNVIKDLLGLCEMKRGKDNKAVVASNIMYVVGQYPRFLKAHWKFLKTVVNKLFEFMHEYHEGVQDMACDTFIKIAQKCRRHFVAQQLGETEPFINEIIRNLAKTTEDLTPQQTHTFYEACGYMISAQPQKHLQERLIFDLMALPNQAWENIVAQAAQNAQVLGDPQTVKILANVLKTNVAACTSIGSGFYPQIAKNYVDMLGLYKAVSGLISEVVAAQGNIATKTPHVRGLRTIKKEILKLVDAYISRAEDLELVGNTLIPALFEAVLLDYLQNVPDARDAEVLNLITTIVNQLSELLTDKIPLVLDAVFGCTLEMISKDFSEYPEHRAAFFQLLRAINLNCFPALLNIPAPQFKLVINSIVWSFKHVSRDIQETGLNILLELINNMASMGPDVSNAFFQTYYISLLQDILYVLTDSDHKSGFKLQSLILARLFYLVESNQITVPLYDPSQFPQEMNNQLFLRQYIMNLLVTAFPHLQPIQIQEFVQTVLALNQDSIKFKLALRDFLIQLKEFGGDNAELYLEEKEQELAAQQKAQLEKAMTVPGMIKPVDMPTMEEEEL.

One can recognise an Importin N-terminal domain in the interval 34 to 100 (AQQVLTQFQA…RNYIVAVMIK (67 aa)).

The protein belongs to the exportin family. Interacts with php4.

It is found in the nucleus. Receptor for the leucine-rich nuclear export signal (NES). This is Exportin-1 (xpo1) from Schizosaccharomyces pombe (strain 972 / ATCC 24843) (Fission yeast).